The following is a 406-amino-acid chain: Argininosuccinate synthase (406 aa).

Residues 14-22 and A41 contribute to the ATP site; that span reads AYSGGLDTS. 2 residues coordinate L-citrulline: Y92 and S97. G122 lines the ATP pocket. T124, N128, and D129 together coordinate L-aspartate. N128 is an L-citrulline binding site. R132, S181, S190, E266, and Y278 together coordinate L-citrulline.

This sequence belongs to the argininosuccinate synthase family. Type 1 subfamily. In terms of assembly, homotetramer.

The protein resides in the cytoplasm. The catalysed reaction is L-citrulline + L-aspartate + ATP = 2-(N(omega)-L-arginino)succinate + AMP + diphosphate + H(+). It participates in amino-acid biosynthesis; L-arginine biosynthesis; L-arginine from L-ornithine and carbamoyl phosphate: step 2/3. The sequence is that of Argininosuccinate synthase from Geobacter metallireducens (strain ATCC 53774 / DSM 7210 / GS-15).